The following is a 216-amino-acid chain: Sperm microtubule inner protein 8 (216 aa).

As to quaternary structure, microtubule inner protein component of sperm flagellar doublet microtubules. As to expression, expressed in testis.

It is found in the cytoplasm. The protein localises to the cytoskeleton. The protein resides in the flagellum axoneme. Its function is as follows. Microtubule inner protein (MIP) part of the dynein-decorated doublet microtubules (DMTs) in flagellum axoneme. May serve to reinforce and thus stabilize the microtubule structure in the sperm flagella. This chain is Sperm microtubule inner protein 8 (Spmip8), found in Mus musculus (Mouse).